A 375-amino-acid chain; its full sequence is MSCPVIELTQQLIRRPSLSPDDAGCQALMIERLRKIGFTIEHMDFGDTQNFWAWRGRGETLAFAGHTDVVPAGDVDRWINPPFEPTIRDGMLFGRGAADMKGSLAAMVVAAERFVAQHPHHRGRLAFLITSDEEASAKNGTVKVVEALMARNERLDYCLVGEPSSTEIVGDVVKNGRRGSLTCNLTIHGVQGHVAYPHLADNPVHRAAPFLNELVAIEWDRGNDFFPATSMQVANIQAGTGSNNVIPGELFVQFNFRFSTELTDEIIKERVHALLEKHQLRYTVDWWLSGQPFLTARGKLVDAVVNAIEHYNEIKPQLLTTGGTSDGRFIARMGAQVVELGPVNATIHKINECVNAADLQLLARMYQRIMEQLVA.

His66 contributes to the Zn(2+) binding site. Asp68 is an active-site residue. Residue Asp99 participates in Zn(2+) binding. Glu133 acts as the Proton acceptor in catalysis. Zn(2+)-binding residues include Glu134, Glu162, and His348.

This sequence belongs to the peptidase M20A family. DapE subfamily. As to quaternary structure, homodimer. Zn(2+) is required as a cofactor. Requires Co(2+) as cofactor.

The catalysed reaction is N-succinyl-(2S,6S)-2,6-diaminopimelate + H2O = (2S,6S)-2,6-diaminopimelate + succinate. Its pathway is amino-acid biosynthesis; L-lysine biosynthesis via DAP pathway; LL-2,6-diaminopimelate from (S)-tetrahydrodipicolinate (succinylase route): step 3/3. Functionally, catalyzes the hydrolysis of N-succinyl-L,L-diaminopimelic acid (SDAP), forming succinate and LL-2,6-diaminopimelate (DAP), an intermediate involved in the bacterial biosynthesis of lysine and meso-diaminopimelic acid, an essential component of bacterial cell walls. This Salmonella choleraesuis (strain SC-B67) protein is Succinyl-diaminopimelate desuccinylase.